The following is a 783-amino-acid chain: Lon protease (783 aa).

A Lon N-terminal domain is found at 16-210; the sequence is LPLLASRGVV…KLLEIIKDEI (195 aa). 361–368 is a binding site for ATP; the sequence is GAPGVGKT. Residues 597 to 778 form the Lon proteolytic domain; it reads KDRVGVATGM…DQVLDLILGG (182 aa). Active-site residues include Ser-684 and Lys-727.

The protein belongs to the peptidase S16 family. Homohexamer. Organized in a ring with a central cavity.

Its subcellular location is the cytoplasm. It catalyses the reaction Hydrolysis of proteins in presence of ATP.. ATP-dependent serine protease that mediates the selective degradation of mutant and abnormal proteins as well as certain short-lived regulatory proteins. Required for cellular homeostasis and for survival from DNA damage and developmental changes induced by stress. Degrades polypeptides processively to yield small peptide fragments that are 5 to 10 amino acids long. Binds to DNA in a double-stranded, site-specific manner. The polypeptide is Lon protease (Halothermothrix orenii (strain H 168 / OCM 544 / DSM 9562)).